We begin with the raw amino-acid sequence, 217 residues long: Trimethylamine corrinoid protein (217 aa).

The region spanning 1 to 92 (MANKEEIIAK…EMEKRKSQTK (92 aa)) is the B12-binding N-terminal domain. The 124-residue stretch at 94 to 217 (LGTVAIGTIE…VAKVKAALNV (124 aa)) folds into the B12-binding domain. His-107 contributes to the methylcob(III)alamin binding site.

The protein belongs to the methylamine corrinoid protein family. In terms of assembly, can form a complex with MttB.

It functions in the pathway one-carbon metabolism; methanogenesis from trimethylamine. Acts probably as a methyl group carrier between MttB and either MtbA or MtaA. The polypeptide is Trimethylamine corrinoid protein (Methanosarcina barkeri).